Reading from the N-terminus, the 273-residue chain is Shikimate dehydrogenase (NADP(+)) (273 aa).

Residues Ser14 to Ser16 and Thr59 each bind shikimate. Residue Lys63 is the Proton acceptor of the active site. Residues Asn84 and Asp99 each contribute to the shikimate site. Residues Gly122–Ala126 and Met212 contribute to the NADP(+) site. Residue Tyr214 participates in shikimate binding. Gly235 contacts NADP(+).

The protein belongs to the shikimate dehydrogenase family. As to quaternary structure, homodimer.

The catalysed reaction is shikimate + NADP(+) = 3-dehydroshikimate + NADPH + H(+). Its pathway is metabolic intermediate biosynthesis; chorismate biosynthesis; chorismate from D-erythrose 4-phosphate and phosphoenolpyruvate: step 4/7. Involved in the biosynthesis of the chorismate, which leads to the biosynthesis of aromatic amino acids. Catalyzes the reversible NADPH linked reduction of 3-dehydroshikimate (DHSA) to yield shikimate (SA). The sequence is that of Shikimate dehydrogenase (NADP(+)) from Aeropyrum pernix (strain ATCC 700893 / DSM 11879 / JCM 9820 / NBRC 100138 / K1).